Here is a 386-residue protein sequence, read N- to C-terminus: Cytochrome b (386 aa).

Helical transmembrane passes span 32–52 (LGSL…FLAM), 76–98 (YLIR…AHIG), 113–133 (VWVI…LGYC), and 179–199 (FFAL…MHLM). Heme b is bound by residues histidine 82 and histidine 96. Residues histidine 183 and histidine 197 each contribute to the heme b site. Residue histidine 202 coordinates a ubiquinone. 4 helical membrane-spanning segments follow: residues 225-245 (FVFK…LFVF), 289-309 (LGGV…PVTD), 321-341 (ISKT…QLGQ), and 348-368 (FIQL…FIVP).

Belongs to the cytochrome b family. In terms of assembly, fungal cytochrome b-c1 complex contains 10 subunits; 3 respiratory subunits, 2 core proteins and 5 low-molecular weight proteins. Cytochrome b-c1 complex is a homodimer. Heme b serves as cofactor.

The protein resides in the mitochondrion inner membrane. Component of the ubiquinol-cytochrome c reductase complex (complex III or cytochrome b-c1 complex) that is part of the mitochondrial respiratory chain. The b-c1 complex mediates electron transfer from ubiquinol to cytochrome c. Contributes to the generation of a proton gradient across the mitochondrial membrane that is then used for ATP synthesis. This chain is Cytochrome b (COB), found in Wickerhamomyces canadensis (Yeast).